Reading from the N-terminus, the 849-residue chain is Aminopeptidase N (849 aa).

Residues Glu122 and 259 to 263 (GAMEN) contribute to the substrate site. His294 is a binding site for Zn(2+). The active-site Proton acceptor is Glu295. Zn(2+)-binding residues include His298 and Glu317.

Belongs to the peptidase M1 family. Monomer. Requires Zn(2+) as cofactor.

The protein resides in the cytoplasm. The enzyme catalyses Release of an N-terminal amino acid, Xaa-|-Yaa- from a peptide, amide or arylamide. Xaa is preferably Ala, but may be most amino acids including Pro (slow action). When a terminal hydrophobic residue is followed by a prolyl residue, the two may be released as an intact Xaa-Pro dipeptide.. In terms of biological role, aminopeptidase with broad substrate specificity to several peptides. It has more affinity for oligopeptides than for dipeptides. It plays an essential role in the metabolism, it may be involved in nitrogen supply or protein turnover. The protein is Aminopeptidase N (pepN) of Lactococcus lactis subsp. lactis (Streptococcus lactis).